A 307-amino-acid chain; its full sequence is Major immediate early protein (307 aa).

Residues 39 to 92 (CAVCLETYCVQSNNIIDFLMPSECTHLFCYKCVLNMYKNAMNVPRAAVSCPMCN) form an RING-type zinc finger.

This is Major immediate early protein (PE38) from Orgyia pseudotsugata multicapsid polyhedrosis virus (OpMNPV).